The chain runs to 360 residues: Methyltransferase pvhD (360 aa).

Residues 201–202 (SG), D227, 251–252 (DL), R267, and R268 contribute to the S-adenosyl-L-methionine site.

It belongs to the class I-like SAM-binding methyltransferase superfamily. Cation-independent O-methyltransferase family.

It functions in the pathway secondary metabolite biosynthesis. Its function is as follows. Methyltransferase; part of the gene cluster that mediates the biosynthesis of varicidin A, an antifungal natural product containing a cis-octahydrodecalin core. The PKS module of pvhA together with the enoylreductase pvhC catalyze the formation of the polyketide unit which is then conjugated to L-isoleucine by the condensation domain of the NRPS module. Activity of the Dieckmann cyclase domain (RED) of pvhA results in release of an acyclic tetramate. The cytochrome P450 monooxygenase pvhE then catalyzes the oxidation of the C21 methyl group to a to carboxylate group. The methyltransferase pvhD then further methylates the pvhE product. The Diels-Alderase pvhB is able to catalyze Diels-Alder cycloaddition using both pvhE and pvhD products as substrates to form the decalin ring, yielding varicidin B and A, respectively. This is Methyltransferase pvhD from Talaromyces variabilis (Penicillium variabile).